We begin with the raw amino-acid sequence, 397 residues long: L-rhamnonate dehydratase (397 aa).

Substrate is bound by residues H25 and R51. Mg(2+)-binding residues include D217, E243, and E271. Residue H321 is the Proton acceptor of the active site. Residue E341 coordinates substrate.

The protein belongs to the mandelate racemase/muconate lactonizing enzyme family. RhamD subfamily. Homooctamer; tetramer of dimers. Mg(2+) is required as a cofactor.

The catalysed reaction is L-rhamnonate = 2-dehydro-3-deoxy-L-rhamnonate + H2O. It functions in the pathway carbohydrate degradation; L-rhamnose degradation. Catalyzes the dehydration of L-rhamnonate to 2-keto-3-deoxy-L-rhamnonate (KDR). Also shows activity with L-lyxonate and L-mannonate, with much lower catalytic efficiency. Catalyzes the third step in an alternative pathway for rhamnose utilization that does not involve phosphorylated intermediates. The protein is L-rhamnonate dehydratase of Sphingomonas sp. (strain SKA58).